We begin with the raw amino-acid sequence, 590 residues long: uncharacterized protein (590 aa).

The disordered stretch occupies residues 330–368 (IDKSESDIDDSESDIDSENDIDSESDIDDSETDDEEELE). The segment covering 336 to 368 (DIDDSESDIDSENDIDSESDIDDSETDDEEELE) has biased composition (acidic residues).

Belongs to the mimivirus L5 family.

This is an uncharacterized protein from Acanthamoeba polyphaga mimivirus (APMV).